A 338-amino-acid chain; its full sequence is NLP effector protein 6 (338 aa).

An N-terminal signal peptide occupies residues 1 to 19; it reads MRFTTIFWISLTVLATVRA. Positions 68–119 are disordered; the sequence is LTLSPSASSPAKRNVTLPPDTTMRPDPRQTEPPTEAPTPASTPAPTPDPGPW. A glycan (N-linked (GlcNAc...) asparagine) is linked at Asn-81. A compositionally biased stretch (pro residues) spans 101–117; sequence TEAPTPASTPAPTPDPG. Positions 205 to 215 match the Conserved undecapeptide motif I motif; the sequence is AIMYSWYFPKD. Positions 222-227 match the Hepta-peptide GHRHDWE motif II motif; it reads GHRHDW.

The protein belongs to the Necrosis inducing protein (NPP1) family.

Its subcellular location is the secreted. Functionally, secreted effector that contributes strongly to virulence during infection by P.capsici. Causes large necrotic areas in both host C.annuum and non-host N.benthamiana. This chain is NLP effector protein 6, found in Phytophthora capsici.